Here is a 145-residue protein sequence, read N- to C-terminus: Maximins 5/H4 type 2 (145 aa).

Residues 1–18 (MNFKYIVAVSFLIASAYA) form the signal peptide. Propeptides lie at residues 19–43 (RSVQNDEQSLSQRDVLEEESLREIR) and 74–124 (TAEE…KEKR). Position 144 is a leucine amide (Leu144).

This sequence belongs to the bombinin family. Expressed by the skin glands.

It localises to the secreted. In terms of biological role, maximin-5 shows antibacterial activity against both Gram-positive and Gram-negative bacteria. The only exception is the resistance of E.coli. Also shows antimicrobial activity against fungi C.albicans, A.flavus and P.uticale. It has little hemolytic activity. It does not possess a significant cytotoxicity against tumor cell lines. It does not possess a significant anti-HIV activity. Its function is as follows. Maximin-H4 shows antibacterial activity against both Gram-positive and Gram-negative bacteria. It also shows antimicrobial activity against the fungus C.albicans. Shows strong hemolytic activity. The protein is Maximins 5/H4 type 2 of Bombina maxima (Giant fire-bellied toad).